The primary structure comprises 355 residues: Phenylalanine--tRNA ligase alpha subunit (355 aa).

A Mg(2+)-binding site is contributed by Glu-273.

It belongs to the class-II aminoacyl-tRNA synthetase family. Phe-tRNA synthetase alpha subunit type 1 subfamily. Tetramer of two alpha and two beta subunits. Requires Mg(2+) as cofactor.

It localises to the cytoplasm. The catalysed reaction is tRNA(Phe) + L-phenylalanine + ATP = L-phenylalanyl-tRNA(Phe) + AMP + diphosphate + H(+). The polypeptide is Phenylalanine--tRNA ligase alpha subunit (Bifidobacterium longum (strain NCC 2705)).